The chain runs to 349 residues: DNA replication and repair protein RecF (349 aa).

Position 30–37 (30–37) interacts with ATP; that stretch reads GKNGSGKT.

Belongs to the RecF family.

Its subcellular location is the cytoplasm. Functionally, the RecF protein is involved in DNA metabolism; it is required for DNA replication and normal SOS inducibility. RecF binds preferentially to single-stranded, linear DNA. It also seems to bind ATP. In Francisella tularensis subsp. novicida (strain U112), this protein is DNA replication and repair protein RecF.